The primary structure comprises 356 residues: Protein disulfide isomerase crld-1 (356 aa).

The first 17 residues, methionine 1–glutamine 17, serve as a signal peptide directing secretion. The Lumenal segment spans residues lysine 18 to glutamine 299. The CXXC motif lies at cysteine 27 to cysteine 30. A disulfide bridge connects residues cysteine 27 and cysteine 30. Asparagine 122 carries N-linked (GlcNAc...) asparagine glycosylation. One can recognise an EGF-like 1 domain in the interval glycine 150–arginine 188. Disulfide bonds link cysteine 158-cysteine 176, cysteine 178-cysteine 187, cysteine 245-cysteine 258, cysteine 251-cysteine 267, and cysteine 269-cysteine 281. The region spanning aspartate 241–glutamine 282 is the EGF-like 2; calcium-binding domain. A glycan (N-linked (GlcNAc...) asparagine) is linked at asparagine 247. Residues leucine 300–tryptophan 317 form a helical membrane-spanning segment. Topologically, residues histidine 318 to proline 321 are cytoplasmic. A helical membrane pass occupies residues valine 322 to valine 341. Residues asparagine 342–tyrosine 356 lie on the Lumenal side of the membrane.

The protein belongs to the CRELD family. In terms of assembly, interacts with unc-29. As to expression, isoforms a: Widely expressed in tissues including body wall muscles, neurons, pharynx, hypodermis, seam cells, intestine and gonad. Isoform b: Widely expressed in tissues including body wall muscles, neurons, pharynx, hypodermis, seam cells, intestine and gonad.

It is found in the endoplasmic reticulum membrane. Its subcellular location is the endoplasmic reticulum lumen. It catalyses the reaction Catalyzes the rearrangement of -S-S- bonds in proteins.. Its function is as follows. Protein disulfide isomerase which associates with the unc-29 subunit of levamisole-sensitive nicotinic acetylcholine receptors (L-nAChR) to promote L-nAChR assembly in the endoplasmic reticulum at neuromuscular junctions. Promotes L-nAChR assembly in the endoplasmic reticulum at neuromuscular junctions. In Caenorhabditis elegans, this protein is Protein disulfide isomerase crld-1.